The chain runs to 365 residues: Chorismate synthase (365 aa).

R47 is an NADP(+) binding site. Residues 124–126 (RAS), G287, 302–306 (KPTAT), and R328 contribute to the FMN site.

It belongs to the chorismate synthase family. Homotetramer. FMNH2 is required as a cofactor.

The catalysed reaction is 5-O-(1-carboxyvinyl)-3-phosphoshikimate = chorismate + phosphate. It functions in the pathway metabolic intermediate biosynthesis; chorismate biosynthesis; chorismate from D-erythrose 4-phosphate and phosphoenolpyruvate: step 7/7. Catalyzes the anti-1,4-elimination of the C-3 phosphate and the C-6 proR hydrogen from 5-enolpyruvylshikimate-3-phosphate (EPSP) to yield chorismate, which is the branch point compound that serves as the starting substrate for the three terminal pathways of aromatic amino acid biosynthesis. This reaction introduces a second double bond into the aromatic ring system. This chain is Chorismate synthase, found in Prochlorococcus marinus (strain MIT 9312).